A 513-amino-acid chain; its full sequence is Probable mannosyl-oligosaccharide alpha-1,2-mannosidase 1B (513 aa).

Positions 1–21 are cleaved as a signal peptide; it reads MHLSSLSLSLTALAIVSPSAA. Residues Asn-97, Asn-117, Asn-184, Asn-251, Asn-322, Asn-348, and Asn-368 are each glycosylated (N-linked (GlcNAc...) asparagine). A disulfide bridge connects residues Cys-334 and Cys-363. The Proton donor role is filled by Glu-377. Residue Thr-503 participates in Ca(2+) binding.

It belongs to the glycosyl hydrolase 47 family. In terms of assembly, monomer. It depends on Ca(2+) as a cofactor. Requires Mg(2+) as cofactor.

It is found in the cytoplasmic vesicle lumen. It catalyses the reaction N(4)-(alpha-D-Man-(1-&gt;2)-alpha-D-Man-(1-&gt;2)-alpha-D-Man-(1-&gt;3)-[alpha-D-Man-(1-&gt;2)-alpha-D-Man-(1-&gt;3)-[alpha-D-Man-(1-&gt;2)-alpha-D-Man-(1-&gt;6)]-alpha-D-Man-(1-&gt;6)]-beta-D-Man-(1-&gt;4)-beta-D-GlcNAc-(1-&gt;4)-beta-D-GlcNAc)-L-asparaginyl-[protein] (N-glucan mannose isomer 9A1,2,3B1,2,3) + 4 H2O = N(4)-(alpha-D-Man-(1-&gt;3)-[alpha-D-Man-(1-&gt;3)-[alpha-D-Man-(1-&gt;6)]-alpha-D-Man-(1-&gt;6)]-beta-D-Man-(1-&gt;4)-beta-D-GlcNAc-(1-&gt;4)-beta-D-GlcNAc)-L-asparaginyl-[protein] (N-glucan mannose isomer 5A1,2) + 4 beta-D-mannose. The enzyme catalyses N(4)-(alpha-D-Man-(1-&gt;2)-alpha-D-Man-(1-&gt;2)-alpha-D-Man-(1-&gt;3)-[alpha-D-Man-(1-&gt;3)-[alpha-D-Man-(1-&gt;2)-alpha-D-Man-(1-&gt;6)]-alpha-D-Man-(1-&gt;6)]-beta-D-Man-(1-&gt;4)-beta-D-GlcNAc-(1-&gt;4)-beta-D-GlcNAc)-L-asparaginyl-[protein] (N-glucan mannose isomer 8A1,2,3B1,3) + 3 H2O = N(4)-(alpha-D-Man-(1-&gt;3)-[alpha-D-Man-(1-&gt;3)-[alpha-D-Man-(1-&gt;6)]-alpha-D-Man-(1-&gt;6)]-beta-D-Man-(1-&gt;4)-beta-D-GlcNAc-(1-&gt;4)-beta-D-GlcNAc)-L-asparaginyl-[protein] (N-glucan mannose isomer 5A1,2) + 3 beta-D-mannose. Its pathway is protein modification; protein glycosylation. Functionally, involved in the maturation of Asn-linked oligosaccharides. Progressively trims alpha-1,2-linked mannose residues from Man(9)GlcNAc(2) to produce Man(5)GlcNAc(2). The protein is Probable mannosyl-oligosaccharide alpha-1,2-mannosidase 1B (mns1B) of Aspergillus niger (strain ATCC MYA-4892 / CBS 513.88 / FGSC A1513).